A 306-amino-acid polypeptide reads, in one-letter code: Low-density lipoprotein receptor class A domain-containing protein 4 (306 aa).

The Lumenal segment spans residues Met1–Glu64. An LDL-receptor class A domain is found at Lys16–Leu48. Cystine bridges form between Cys19-Cys38 and Cys32-Cys47. Residues Phe65–Leu85 form a helical membrane-spanning segment. Residues Leu86 to Val306 are Cytoplasmic-facing. The short motif at Pro180 to Tyr183 is the PPxY motif 1 element. An SMAD interaction motif (SIM) motif is present at residues Pro208–Arg211. The PPxY motif 2 motif lies at Pro252 to Tyr255. A disordered region spans residues Asn286–Val306. The span at Lys296–Val306 shows a compositional bias: basic and acidic residues.

Belongs to the PMEPA1 family. In terms of assembly, interacts with PMEPA1. Interacts (via the SMAD interaction motif) with SMAD2 and SMAD3. Expressed in lymphocytes.

It localises to the early endosome membrane. Its function is as follows. Functions as a negative regulator of TGF-beta signaling and thereby probably plays a role in cell proliferation, differentiation, apoptosis, motility, extracellular matrix production and immunosuppression. In the canonical TGF-beta pathway, ZFYVE9/SARA recruits the intracellular signal transducer and transcriptional modulators SMAD2 and SMAD3 to the TGF-beta receptor. Phosphorylated by the receptor, SMAD2 and SMAD3 then form a heteromeric complex with SMAD4 that translocates to the nucleus to regulate transcription. Through interaction with SMAD2 and SMAD3, LDLRAD4 may compete with ZFYVE9 and SMAD4 and prevent propagation of the intracellular signal. In Homo sapiens (Human), this protein is Low-density lipoprotein receptor class A domain-containing protein 4 (LDLRAD4).